Reading from the N-terminus, the 181-residue chain is ADP-ribosylation factor 1 (181 aa).

Glycine 2 carries N-myristoyl glycine lipidation. GTP contacts are provided by residues 24-31 (GLDAAGKT), 126-129 (NKQD), and alanine 160.

This sequence belongs to the small GTPase superfamily. Arf family. As to quaternary structure, may interact with GTPase RAB5b.

Its subcellular location is the golgi apparatus membrane. The catalysed reaction is GTP + H2O = GDP + phosphate + H(+). Alternates between an inactive GDP-bound form and an active GTP-bound form. Intrinsic GTPase activity is almost undetectable in vitro. Activated by a guanine nucleotide-exchange factor (GEF) and inactivated by GTPase-activating protein ARFGAP1. Functionally, small GTPase involved in protein trafficking between different compartments. Modulates vesicle budding and uncoating within the Golgi complex. In its GTP-bound form, triggers the recruitment of coatomer proteins to the Golgi membrane. The hydrolysis of ARF1-bound GTP, which is mediated by ARFGAPs proteins, is required for dissociation of coat proteins from Golgi membranes and vesicles. Regulates the transport of N-acylated AK2 to the parasitophorous vacuole membrane. May be involved in the activation of lipid kinase PIP5K. In Plasmodium falciparum (isolate NF54), this protein is ADP-ribosylation factor 1 (ARF1).